The sequence spans 461 residues: Photosystem II CP43 reaction center protein (461 aa).

A propeptide spanning residues 1–2 (ME) is cleaved from the precursor. T3 carries the N-acetylthreonine modification. Phosphothreonine is present on T3. 5 helical membrane passes run 57 to 81 (LFEVAHFVPEKPMYEQGLILLPHLA), 122 to 143 (LIGPETLEESFPFFGYVWKDKN), 166 to 188 (KAMYFGGVYDTWAPGGGDVRIIT), 243 to 263 (TPWPWARRAFVWSGEAYLSYS), and 279 to 300 (WFNNTAYPSEFYGPTGPEASQS). E355 lines the [CaMn4O5] cluster pocket. The helical transmembrane segment at 435–459 (RARAAAAGFEKGIDRLDEPVLSMRP) threads the bilayer.

The protein belongs to the PsbB/PsbC family. PsbC subfamily. As to quaternary structure, PSII is composed of 1 copy each of membrane proteins PsbA, PsbB, PsbC, PsbD, PsbE, PsbF, PsbH, PsbI, PsbJ, PsbK, PsbL, PsbM, PsbT, PsbX, PsbY, PsbZ, Psb30/Ycf12, at least 3 peripheral proteins of the oxygen-evolving complex and a large number of cofactors. It forms dimeric complexes. It depends on Binds multiple chlorophylls and provides some of the ligands for the Ca-4Mn-5O cluster of the oxygen-evolving complex. It may also provide a ligand for a Cl- that is required for oxygen evolution. PSII binds additional chlorophylls, carotenoids and specific lipids. as a cofactor.

It is found in the plastid. The protein resides in the chloroplast thylakoid membrane. Functionally, one of the components of the core complex of photosystem II (PSII). It binds chlorophyll and helps catalyze the primary light-induced photochemical processes of PSII. PSII is a light-driven water:plastoquinone oxidoreductase, using light energy to abstract electrons from H(2)O, generating O(2) and a proton gradient subsequently used for ATP formation. In Tetradesmus obliquus (Green alga), this protein is Photosystem II CP43 reaction center protein.